Reading from the N-terminus, the 390-residue chain is tRNA(Met) cytidine acetate ligase (390 aa).

Residues 7–20 (VVEY…HKLH), Gly101, Asn162, and Arg187 each bind ATP.

Belongs to the TmcAL family.

The protein localises to the cytoplasm. It catalyses the reaction cytidine(34) in elongator tRNA(Met) + acetate + ATP = N(4)-acetylcytidine(34) in elongator tRNA(Met) + AMP + diphosphate. Functionally, catalyzes the formation of N(4)-acetylcytidine (ac(4)C) at the wobble position of elongator tRNA(Met), using acetate and ATP as substrates. First activates an acetate ion to form acetyladenylate (Ac-AMP) and then transfers the acetyl group to tRNA to form ac(4)C34. The polypeptide is tRNA(Met) cytidine acetate ligase (Listeria monocytogenes serotype 4a (strain HCC23)).